The primary structure comprises 252 residues: 3-dehydroquinate dehydratase (252 aa).

3-dehydroquinate is bound by residues 46-48 (EWR) and Arg82. The active-site Proton donor/acceptor is the His143. Lys170 (schiff-base intermediate with substrate) is an active-site residue. The 3-dehydroquinate site is built by Arg212, Ser231, and Gln235.

The protein belongs to the type-I 3-dehydroquinase family. Homodimer.

It catalyses the reaction 3-dehydroquinate = 3-dehydroshikimate + H2O. The protein operates within metabolic intermediate biosynthesis; chorismate biosynthesis; chorismate from D-erythrose 4-phosphate and phosphoenolpyruvate: step 3/7. Functionally, involved in the third step of the chorismate pathway, which leads to the biosynthesis of aromatic amino acids. Catalyzes the cis-dehydration of 3-dehydroquinate (DHQ) and introduces the first double bond of the aromatic ring to yield 3-dehydroshikimate. The sequence is that of 3-dehydroquinate dehydratase from Listeria monocytogenes serotype 4b (strain CLIP80459).